A 787-amino-acid polypeptide reads, in one-letter code: Formate acetyltransferase (787 aa).

A PFL domain is found at 8 to 629 (NIFEQAWDGF…GNSPVHKGVF (622 aa)). The active-site S-acetylcysteine intermediate is the cysteine 416. Cysteine 417 serves as the catalytic Cysteine radical intermediate. In terms of domain architecture, Glycine radical spans 645–774 (SPGANPSNKA…LTERVFHEVL (130 aa)). Glycine 749 is subject to Glycine radical.

Belongs to the glycyl radical enzyme (GRE) family. PFL subfamily. Homodimer.

The protein localises to the cytoplasm. It carries out the reaction formate + acetyl-CoA = pyruvate + CoA. The protein operates within fermentation; pyruvate fermentation; formate from pyruvate: step 1/1. This is Formate acetyltransferase (pfl) from Lactococcus lactis subsp. cremoris (strain MG1363).